Consider the following 144-residue polypeptide: Large ribosomal subunit protein uL11 (144 aa).

Belongs to the universal ribosomal protein uL11 family. Part of the ribosomal stalk of the 50S ribosomal subunit. Interacts with L10 and the large rRNA to form the base of the stalk. L10 forms an elongated spine to which L12 dimers bind in a sequential fashion forming a multimeric L10(L12)X complex. In terms of processing, one or more lysine residues are methylated.

Its function is as follows. Forms part of the ribosomal stalk which helps the ribosome interact with GTP-bound translation factors. The sequence is that of Large ribosomal subunit protein uL11 from Neisseria meningitidis serogroup B (strain ATCC BAA-335 / MC58).